The sequence spans 84 residues: NAD(P)H-quinone oxidoreductase subunit O (84 aa).

The protein belongs to the complex I NdhO subunit family. In terms of assembly, NDH-1 can be composed of about 15 different subunits; different subcomplexes with different compositions have been identified which probably have different functions.

The protein localises to the cellular thylakoid membrane. It carries out the reaction a plastoquinone + NADH + (n+1) H(+)(in) = a plastoquinol + NAD(+) + n H(+)(out). The catalysed reaction is a plastoquinone + NADPH + (n+1) H(+)(in) = a plastoquinol + NADP(+) + n H(+)(out). Functionally, NDH-1 shuttles electrons from an unknown electron donor, via FMN and iron-sulfur (Fe-S) centers, to quinones in the respiratory and/or the photosynthetic chain. The immediate electron acceptor for the enzyme in this species is believed to be plastoquinone. Couples the redox reaction to proton translocation, and thus conserves the redox energy in a proton gradient. Cyanobacterial NDH-1 also plays a role in inorganic carbon-concentration. This Synechococcus sp. (strain CC9605) protein is NAD(P)H-quinone oxidoreductase subunit O.